The primary structure comprises 67 residues: Gallinacin-6 (67 aa).

The signal sequence occupies residues 1 to 19 (MRILYLLLSVLFVVLQGVA). Residues 20-25 (GQPYFS) constitute a propeptide that is removed on maturation. 3 disulfides stabilise this stretch: cysteine 31–cysteine 60, cysteine 38–cysteine 53, and cysteine 43–cysteine 61.

Belongs to the beta-defensin family. As to expression, expressed in bone marrow, testis, ovary, lung and trachea. Expressed in the ovarian stroma, but not in the ovarian follicles.

Its subcellular location is the secreted. The protein localises to the cytoplasmic granule. In terms of biological role, has bactericidal activity. Potent activity against S.typhimurium and S.entiriditis. The sequence is that of Gallinacin-6 (GAL6) from Gallus gallus (Chicken).